A 239-amino-acid chain; its full sequence is uncharacterized protein (239 aa).

Residues 13-66 enclose the HTH cro/C1-type domain; the sequence is IEYLVDKLNGPSEFARKTGVTLSTITRWRKGEADPSRSNLVKIAEVTGVSIEWL. A DNA-binding region (H-T-H motif) is located at residues 24-43; the sequence is SEFARKTGVTLSTITRWRKG.

This is an uncharacterized protein from Haemophilus influenzae (strain ATCC 51907 / DSM 11121 / KW20 / Rd).